The following is a 312-amino-acid chain: Malate dehydrogenase (312 aa).

NAD(+) contacts are provided by residues 7 to 13 and Asp34; that span reads GAAGGIG. 2 residues coordinate substrate: Arg81 and Arg87. NAD(+) is bound by residues Asn94 and 117–119; that span reads ITN. Residues Asn119 and Arg153 each contribute to the substrate site. The active-site Proton acceptor is His177. Met227 is a binding site for NAD(+).

Belongs to the LDH/MDH superfamily. MDH type 1 family. As to quaternary structure, homodimer.

It catalyses the reaction (S)-malate + NAD(+) = oxaloacetate + NADH + H(+). Its function is as follows. Catalyzes the reversible oxidation of malate to oxaloacetate. The sequence is that of Malate dehydrogenase from Salmonella arizonae (strain ATCC BAA-731 / CDC346-86 / RSK2980).